The sequence spans 134 residues: UPF0412 protein YaaI (134 aa).

Positions 1 to 23 are cleaved as a signal peptide; sequence MKSVFTISASLAISLMLCCTAQA.

Belongs to the UPF0412 family.

This Escherichia coli (strain K12) protein is UPF0412 protein YaaI.